The following is a 360-amino-acid chain: Probable dual-specificity RNA methyltransferase RlmN (360 aa).

The active-site Proton acceptor is the glutamate 97. Positions 103 to 330 (DGDRLTFCIS…TAVRRSRGLD (228 aa)) constitute a Radical SAM core domain. Cysteines 110 and 335 form a disulfide. [4Fe-4S] cluster contacts are provided by cysteine 117, cysteine 121, and cysteine 124. Residues 165–166 (GE), serine 197, 220–222 (SIH), and histidine 292 each bind S-adenosyl-L-methionine. The active-site S-methylcysteine intermediate is cysteine 335.

Belongs to the radical SAM superfamily. RlmN family. [4Fe-4S] cluster serves as cofactor.

The protein localises to the cytoplasm. The enzyme catalyses adenosine(2503) in 23S rRNA + 2 reduced [2Fe-2S]-[ferredoxin] + 2 S-adenosyl-L-methionine = 2-methyladenosine(2503) in 23S rRNA + 5'-deoxyadenosine + L-methionine + 2 oxidized [2Fe-2S]-[ferredoxin] + S-adenosyl-L-homocysteine. It catalyses the reaction adenosine(37) in tRNA + 2 reduced [2Fe-2S]-[ferredoxin] + 2 S-adenosyl-L-methionine = 2-methyladenosine(37) in tRNA + 5'-deoxyadenosine + L-methionine + 2 oxidized [2Fe-2S]-[ferredoxin] + S-adenosyl-L-homocysteine. Specifically methylates position 2 of adenine 2503 in 23S rRNA and position 2 of adenine 37 in tRNAs. In Gemmatimonas aurantiaca (strain DSM 14586 / JCM 11422 / NBRC 100505 / T-27), this protein is Probable dual-specificity RNA methyltransferase RlmN.